Reading from the N-terminus, the 171-residue chain is UPF0312 protein SE_0264 (171 aa).

It belongs to the UPF0312 family.

This is UPF0312 protein SE_0264 from Staphylococcus epidermidis (strain ATCC 12228 / FDA PCI 1200).